The following is a 543-amino-acid chain: MMTPTELITHYRIVQHSFAPLRLSWWETNRVIAVQIWRDSSFFTRILIAFIGLCLLSIFSRLTRPRSLRRLGIPGAVQPRFSTWSLDFKKVLEDSAKKYPNSPFCLNAFGTEYAVLPSKCYDEVKRLPEHQASAFAFFREAFHGAWTGAGVQTPELGRTIAVELTRGIPSLVHWRQMDCAEAFKMCIGEPSEWREIQLFEAIQRIVISVNSSSFVGRELGTNQNWLRLIYNMPLQLGIPTVILGWTPFLLQPLLKPFLFAPLRMTQRKIKSMLRPVLENDVQEYEASSDKKNLLSPKEQGKVQLTGWLLSRYKGKLDFEVLLQDFITVLFESTPSTASTLFHVVCELAADPALQDMLRQELEEHTDNGSLPQTHLNELRKMDSVMRESARASPFSYLVLYRKLSIPTKLSMGPELPAGTNICVDAHHINTSPDLWDQPHTFDGLRHYRARQQPQNENRYKFANLGSDAPSWGDGLQACPGRMFADNTIKIILTHLLLNYDVKLRPGESKPEKGAMPNGSIVPDVWAKVLFRSRASSAVNEGKK.

The chain crosses the membrane as a helical span at residues 40–60 (SSFFTRILIAFIGLCLLSIFS). Residues N210 and N367 are each glycosylated (N-linked (GlcNAc...) asparagine). Residue C478 participates in heme binding. N517 is a glycosylation site (N-linked (GlcNAc...) asparagine).

The protein belongs to the cytochrome P450 family. Heme serves as cofactor.

The protein localises to the membrane. It functions in the pathway secondary metabolite biosynthesis. Cytochrome P450 monooxygenase; part of the gene cluster that mediates the biosynthesis of a tyrosine-derived cytochalasan acting as a fungal signal recognized by resistant rice plants and leads to avirulence in Pi33 resistant rice cultivars. The first step in the pathway is catalyzed by the hybrid PKS-NRPS ACE1, assisted by the enoyl reductase RAP1, that are responsible for fusion of the tyrosine precursor and the polyketide backbone. The polyketide synthase module (PKS) of ACE1 is responsible for the synthesis of the polyketide backbone and the downstream nonribosomal peptide synthetase (NRPS) amidates the carboxyl end of the polyketide with the tyrosine precursor. Because ACE1 lacks a designated enoylreductase (ER) domain, the required activity is provided the enoyl reductase RAP1. Reduction by the hydrolyase ORFZ, followed by dehydration and intra-molecular Diels-Alder cyclization by the Diels-Alderase ORF3 then yield the required isoindolone-fused macrocycle. A number of oxidative steps catalyzed by the tailoring enzymes identified within the cluster, including cytochrome P450 monooxygenases CYP1 to CYP4, the FAD-linked oxidoreductase OXR2 and the short-chain dehydrogenase/reductase OXR1, are further required to afford the final cytochalasans that confer avirulence and which have still to be identified. The monooxygenase CYP1 has been shown to be a site-selective C-18 hydroxylase whereas the function of CYP3 is the site-selective epoxidation of the C-6/C-7 olefin that is present in some intermediate compounds. Finally, SYN2 and RAP2 are not required for avirulence in Pi33 resistant rice cultivars. The protein is Cytochrome P450 monooxygenase CYP1 of Pyricularia oryzae (strain 70-15 / ATCC MYA-4617 / FGSC 8958) (Rice blast fungus).